We begin with the raw amino-acid sequence, 169 residues long: MKPSSSNSRSKGHAKARRKTREELDQEARDRKRQKKRRGHAPGSRAAGGNTTSGSKGQNAPKDPRIGSKTPIPLGVAEKVTKQHKPKSEKPMLSPQAELELLETDERLDALLERLEAGETLSAEEQSWVDAKLDRIDELMQKLGLSYDDDEEEEEDEKQEDMMRLLRGN.

2 disordered regions span residues 1–100 (MKPS…AELE) and 144–169 (GLSY…LRGN). A compositionally biased stretch (basic residues) spans 10–19 (SKGHAKARRK). The segment covering 20-30 (TREELDQEARD) has biased composition (basic and acidic residues). Residues 31–40 (RKRQKKRRGH) show a composition bias toward basic residues. Positions 49 to 58 (GNTTSGSKGQ) are enriched in polar residues. Residues 147 to 159 (YDDDEEEEEDEKQ) are compositionally biased toward acidic residues. Basic and acidic residues predominate over residues 160–169 (EDMMRLLRGN).

It belongs to the YihI family. In terms of assembly, interacts with Der.

Functionally, a GTPase-activating protein (GAP) that modifies Der/EngA GTPase function. May play a role in ribosome biogenesis. The chain is Der GTPase-activating protein YihI from Escherichia coli O6:H1 (strain CFT073 / ATCC 700928 / UPEC).